The primary structure comprises 1434 residues: MQNNKNYTEKFITDKVMRRDYSKIKSNFEGPNLLEIQVESFKRFMEKDLKEVISSIFPLKSPQGKYTLAFKGLKIKQPTKDESACRDEGKTFETPIYIDLELTDNYTGEVKRAQRNTKTGEDGIYLGAIPKMTEKGTFVINGIEKFVISQIVRSPGIYVLGKSSIKLNGSRKRLFEGKICEIYPSKGTLMLGYIPKDRHNIQIVARDSSGDNAQTFSVTTLLKAFGLTSAEILKIFNNEKEIRESLEIEKYAPEYIFENSQENEIIFKIYSDAHDIHEKADRRESNNKLKEEYIEQGSPLLSKLKQLIFNYVEKNDEIDALLHENKDVEDASFIKNNKKLYDEREEIINCIISEKAAKDIVELLGINIKNIETLRHLGKASYQIALQQHFFNKRLYDISSAGRYKFEKKLLLSERLYQKVIANDIIDKKNNILIPKDTLITKEHIELIKKESRDKNIKWTKKINLLPTALESEIEQFLEYESIAVYKDNDLRDETTEIVGLASGCKLQTLTVADLVATTSYIYNLNYEIGEFDDIDHLGNKRLKLIHELLRARIATSMARIEKFINEKLAISDGSSNNITNVNDKGIDTELDREIEESDMSDEEKKKAISVKSIINTKQFQSLVKDFFNSHQLIQFIDQQNPLAELTNKRRISAMGPGGISREDPNLDIRDVHHSHYSRICPIETPEGMNIGLIMSLASLAKVDENGFIVAPYYVVEDGVVKEDYKYLTAHEDDNYIIAESSVQLDENKRILDEQVVARYRGSTGLFSPNEVDFIDIVPKQVVSIAASAIPFIENDDGARALMGSNMQRQATPLIKPYAPIVGTGTEFKIAHDSGMAVVAKNDGVVEFVDSQKIIIRNDNDKLDDYKLIKYRKSNQDTCNNQIPIVKVGQRVHKSETIGDGPAMQNGELALGRNILVGYTTWRGYNFEDAIIISERLVDQDVFTSIHIDEHTIQCMKTKNGDEEITRDMPNVSDTAKRFLDNQGIVLVGAEVHEGDVLVGKTTPRGNVETAPEDRLLQTIFGDKSKTVKDSSLKVKHGQEGIVAAVKRIKSSDENGSELPDDVIEIIKVYIVQKRKIQVGDKMAGRHGNKGIVSKVVPIQDMPFLKDGTPLDIMLNPLGVPSRMNIGQILELHLGYAAAEIGKKQLIQIAIDQLGYEKYISLFGINEIIAKKLYENISNLIKHKQAKQAKDIDLIDVTIILKELGLSYDDIGIKISTPVFDGANHDDIVSIMNEANIDIENNKGKQVLYDGRTGEPFDGLISVGLTYMLKLDHMVDDKIHSRSVGPYSKITQQPLGGKSQNGGQRFGEMEVWALEAYGAAYNLLEILTIKSDDVQGRNQAYNAIIKGHDVVADGMPESFKLLTKQMQGLGLCITVETKDDRMVDINEYTLNQNRLNNDDDEVILDENLKEINDSNEEIFNTNFNNNDYDDEENF.

Belongs to the RNA polymerase beta chain family. As to quaternary structure, the RNAP catalytic core consists of 2 alpha, 1 beta, 1 beta' and 1 omega subunit. When a sigma factor is associated with the core the holoenzyme is formed, which can initiate transcription.

It catalyses the reaction RNA(n) + a ribonucleoside 5'-triphosphate = RNA(n+1) + diphosphate. DNA-dependent RNA polymerase catalyzes the transcription of DNA into RNA using the four ribonucleoside triphosphates as substrates. The sequence is that of DNA-directed RNA polymerase subunit beta from Ureaplasma parvum serovar 3 (strain ATCC 27815 / 27 / NCTC 11736).